Here is a 283-residue protein sequence, read N- to C-terminus: Putative S-adenosyl-L-methionine-dependent methyltransferase SCO7813 (283 aa).

S-adenosyl-L-methionine is bound by residues Asp121 and 150 to 151; that span reads DL. The tract at residues 264–283 is disordered; it reads MSTLPQHEDGPGGLISAVRR.

The protein belongs to the UPF0677 family.

Functionally, exhibits S-adenosyl-L-methionine-dependent methyltransferase activity. This Streptomyces coelicolor (strain ATCC BAA-471 / A3(2) / M145) protein is Putative S-adenosyl-L-methionine-dependent methyltransferase SCO7813.